Consider the following 405-residue polypeptide: Protein lin-11 (405 aa).

Residues Lys17 and Lys18 each participate in a glycyl lysine isopeptide (Lys-Gly) (interchain with G-Cter in SUMO) cross-link. LIM zinc-binding domains lie at 68–124 (CAAC…RRYS) and 127–187 (CAGC…TATK). Positions 189–205 (STPTSIHRPVSNGSECN) are enriched in polar residues. 2 disordered regions span residues 189–208 (STPT…NSDV) and 224–246 (GEGD…GPRT). Residues 241-300 (RRGPRTTIKAKQLETLKNAFAATPKPTRHIREQLAAETGLNMRVIQVWFQNRRSKERRMK) constitute a DNA-binding region (homeobox).

Expressed in ADL, AVJL, AIZL, RICL, RIF and AVG neurons.

The protein resides in the nucleus. Functionally, probable transcription factor which is required for asymmetric division of vulval blast cells. Involved in olfactory plasticity probably by regulating the expression of transcription factor mbr-1 in RIF neurons. Plays a role in the chemorepulsive response toward ascaroside pheromones mediated by the ADL sensory neurons, probably by regulating E-box motif 5'-CANNTG-3' containing target genes in the ADL neurons. Plays a role in the differentiation of the ADL sensory neurons. In Caenorhabditis elegans, this protein is Protein lin-11 (lin-11).